The following is a 102-amino-acid chain: Glutaredoxin (102 aa).

The 100-residue stretch at 3 to 102 folds into the Glutaredoxin domain; it reads MTKTKELVSS…VPLLTEAGAV (100 aa). Residues Cys-23 and Cys-26 are joined by a disulfide bond.

Belongs to the glutaredoxin family. CPYC subfamily.

The protein resides in the cytoplasm. In terms of biological role, has a glutathione-disulfide oxidoreductase activity in the presence of NADPH and glutathione reductase. Reduces low molecular weight disulfides and proteins. This chain is Glutaredoxin, found in Ricinus communis (Castor bean).